The sequence spans 771 residues: Carnitine O-palmitoyltransferase 1, muscle isoform (771 aa).

The Cytoplasmic portion of the chain corresponds to 1–47 (MAEAHQAVAFQFTVTPEGVDFQLSREVLKHIYLSVIRSWKKRLIRIK). The helical transmembrane segment at 48-73 (NGILRGVYPGSPTSWLVVVMATAGSS) threads the bilayer. At 74–101 (YYNVDISMGLVYYIQRWLPEGRPYRTPY) the chain is on the mitochondrial intermembrane side. Residues 102–121 (TRTLFSMAIFSTGVWMMGIF) form a helical membrane-spanning segment. Residues 122-771 (FFRQTLKLLL…NLFQVPKADG (650 aa)) lie on the Cytoplasmic side of the membrane. His-472 acts as the Proton acceptor in catalysis. 554–566 (GKGLIKKCRTSPD) is a CoA binding site. Tyr-588 and Thr-601 together coordinate (R)-carnitine.

It belongs to the carnitine/choline acetyltransferase family.

It is found in the mitochondrion outer membrane. The enzyme catalyses (R)-carnitine + hexadecanoyl-CoA = O-hexadecanoyl-(R)-carnitine + CoA. It participates in lipid metabolism; fatty acid beta-oxidation. In terms of biological role, catalyzes the transfer of the acyl group of long-chain fatty acid-CoA conjugates onto carnitine, an essential step for the mitochondrial uptake of long-chain fatty acids and their subsequent beta-oxidation in the mitochondrion. The chain is Carnitine O-palmitoyltransferase 1, muscle isoform (CPT1B) from Bos taurus (Bovine).